A 342-amino-acid polypeptide reads, in one-letter code: GTPase Obg (342 aa).

In terms of domain architecture, Obg spans 1-159; it reads MQFIDQAQIE…KLLRLELKLL (159 aa). Positions 160–330 constitute an OBG-type G domain; sequence AEVGIIGLPN…MLQEVWGILD (171 aa). Residues 166 to 173, 191 to 195, 213 to 216, 280 to 283, and 311 to 313 contribute to the GTP site; these read GLPNAGKS, FTTLI, DIPG, NKID, and SAV. Mg(2+) contacts are provided by S173 and T193.

This sequence belongs to the TRAFAC class OBG-HflX-like GTPase superfamily. OBG GTPase family. As to quaternary structure, monomer. The cofactor is Mg(2+).

Its subcellular location is the cytoplasm. An essential GTPase which binds GTP, GDP and possibly (p)ppGpp with moderate affinity, with high nucleotide exchange rates and a fairly low GTP hydrolysis rate. Plays a role in control of the cell cycle, stress response, ribosome biogenesis and in those bacteria that undergo differentiation, in morphogenesis control. The chain is GTPase Obg from Nostoc sp. (strain PCC 7120 / SAG 25.82 / UTEX 2576).